The primary structure comprises 385 residues: Acetate kinase (385 aa).

Asparagine 8 is a Mg(2+) binding site. Lysine 15 is a binding site for ATP. Arginine 85 is a substrate binding site. Residue aspartate 142 is the Proton donor/acceptor of the active site. ATP contacts are provided by residues 200-204 (HLGNG), 275-277 (DMR), and 323-327 (GIGEN). Glutamate 373 serves as a coordination point for Mg(2+).

The protein belongs to the acetokinase family. As to quaternary structure, homodimer. Requires Mg(2+) as cofactor. It depends on Mn(2+) as a cofactor.

Its subcellular location is the cytoplasm. The enzyme catalyses acetate + ATP = acetyl phosphate + ADP. The protein operates within metabolic intermediate biosynthesis; acetyl-CoA biosynthesis; acetyl-CoA from acetate: step 1/2. In terms of biological role, catalyzes the formation of acetyl phosphate from acetate and ATP. Can also catalyze the reverse reaction. The sequence is that of Acetate kinase from Francisella tularensis subsp. holarctica (strain OSU18).